We begin with the raw amino-acid sequence, 227 residues long: Ribose-5-phosphate isomerase A (227 aa).

Residues 28-31 (TGST), 81-84 (DGAD), and 94-97 (KGGG) contribute to the substrate site. E103 acts as the Proton acceptor in catalysis. K121 is a substrate binding site.

Belongs to the ribose 5-phosphate isomerase family. As to quaternary structure, homodimer.

It catalyses the reaction aldehydo-D-ribose 5-phosphate = D-ribulose 5-phosphate. The protein operates within carbohydrate degradation; pentose phosphate pathway; D-ribose 5-phosphate from D-ribulose 5-phosphate (non-oxidative stage): step 1/1. Catalyzes the reversible conversion of ribose-5-phosphate to ribulose 5-phosphate. The polypeptide is Ribose-5-phosphate isomerase A (Caulobacter vibrioides (strain ATCC 19089 / CIP 103742 / CB 15) (Caulobacter crescentus)).